Consider the following 795-residue polypeptide: Protocadherin beta-12 (795 aa).

Positions 1-26 (MENGGAGTLQIRQVLLFFVLLGMSQA) are cleaved as a signal peptide. At 27–690 (GSETGNFLVM…AQADSLTVYL (664 aa)) the chain is on the extracellular side. 5 consecutive Cadherin domains span residues 35–133 (VMEE…SPVF), 138–242 (MLLE…SPEF), 247–347 (YEVK…APEI), 352–451 (ITSP…APAF), and 456–561 (YALF…SPFV). Asparagine 418, asparagine 436, asparagine 487, and asparagine 567 each carry an N-linked (GlcNAc...) asparagine glycan. A Cadherin 6 domain is found at 568–671 (GSAPCTELVP…LVDGFSQPYL (104 aa)). A helical transmembrane segment spans residues 691-711 (VVALASVSSLFLFSVLLFVAV). The Cytoplasmic segment spans residues 712-795 (RLCRRSRAAP…NPPFQNNLGF (84 aa)).

It localises to the cell membrane. Functionally, potential calcium-dependent cell-adhesion protein. May be involved in the establishment and maintenance of specific neuronal connections in the brain. In Homo sapiens (Human), this protein is Protocadherin beta-12 (PCDHB12).